A 268-amino-acid chain; its full sequence is UPF0739 protein C1orf74 homolog (268 aa).

Belongs to the UPF0739 family.

The polypeptide is UPF0739 protein C1orf74 homolog (Salmo salar (Atlantic salmon)).